We begin with the raw amino-acid sequence, 515 residues long: ATP synthase subunit alpha (515 aa).

ATP is bound at residue 169 to 176 (GDRQTGKT).

This sequence belongs to the ATPase alpha/beta chains family. In terms of assembly, F-type ATPases have 2 components, CF(1) - the catalytic core - and CF(0) - the membrane proton channel. CF(1) has five subunits: alpha(3), beta(3), gamma(1), delta(1), epsilon(1). CF(0) has three main subunits: a(1), b(2) and c(9-12). The alpha and beta chains form an alternating ring which encloses part of the gamma chain. CF(1) is attached to CF(0) by a central stalk formed by the gamma and epsilon chains, while a peripheral stalk is formed by the delta and b chains.

It localises to the cell inner membrane. The catalysed reaction is ATP + H2O + 4 H(+)(in) = ADP + phosphate + 5 H(+)(out). Functionally, produces ATP from ADP in the presence of a proton gradient across the membrane. The alpha chain is a regulatory subunit. The sequence is that of ATP synthase subunit alpha from Myxococcus xanthus.